The sequence spans 264 residues: Apolipoprotein A-I (264 aa).

An N-terminal signal peptide occupies residues 1–18 (MKAVVLAVALVFLTGSQA). Tandem repeats lie at residues 67 to 88 (LNLL…ERLG) and 89 to 110 (PLTR…QEMN). The 10 X approximate tandem repeats stretch occupies residues 67–264 (LNLLENWDTL…DKASETLTAQ (198 aa)). Position 109 is a methionine sulfoxide (methionine 109). One copy of the 3; half-length repeat lies at 111 to 121 (KDLEEVKQKVQ). Repeat copies occupy residues 122–143 (PYLD…QKVA), 144–165 (PLGA…GRLS), and 166–187 (PVAE…TQLA). A 7; truncated repeat occupies 188–207 (PHSEQMRESLAQRLAELKSN). Methionine 193 is subject to Methionine sulfoxide. Residues 208 to 229 (PTLNEYHTRAKTHLKTLGEKAR) form repeat 8. The 9; half-length repeat unit spans residues 230-240 (PALEDLRHSLM). A methionine sulfoxide mark is found at methionine 240 and methionine 242. Copy 10 of the repeat occupies 241 to 264 (PMLETLKTQVQSVIDKASETLTAQ).

The protein belongs to the apolipoprotein A1/A4/E family. Homodimer. Interacts with APOA1BP and CLU. Component of a sperm activating protein complex (SPAP), consisting of APOA1, an immunoglobulin heavy chain, an immunoglobulin light chain and albumin. Interacts with NDRG1. Interacts with SCGB3A2. Interacts with NAXE and YJEFN3. In terms of processing, glycosylated. Post-translationally, palmitoylated. May be acylated. In terms of processing, phosphorylation sites are present in the extracellular medium. Major protein of plasma HDL, also found in chylomicrons.

The protein localises to the secreted. Its function is as follows. Participates in the reverse transport of cholesterol from tissues to the liver for excretion by promoting cholesterol efflux from tissues and by acting as a cofactor for the lecithin cholesterol acyltransferase (LCAT). As part of the SPAP complex, activates spermatozoa motility. The chain is Apolipoprotein A-I (Apoa1) from Mus musculus (Mouse).